The chain runs to 775 residues: E3 ubiquitin-protein ligase ICP0 (775 aa).

Residues 1–112 form a disordered region; it reads MEPRPGASTR…PPREDGGSDE (112 aa). 2 stretches are compositionally biased toward basic and acidic residues: residues 10 to 21 and 45 to 57; these read RRPEGRPQREPA and VGGR…HDDD. Residues 58 to 69 are compositionally biased toward acidic residues; that stretch reads SASEADSTDTEL. The residue at position 67 (Thr67) is a Phosphothreonine; by host; by CK1. The segment at 116 to 157 adopts an RING-type zinc-finger fold; it reads CAVCTDEIAPHLRCDTFPCMHRFCIPCMKTWMQLRNTCPLCN. Residues 221–636 form a disordered region; that stretch reads RALSPTHPEP…HAETSGAVPA (416 aa). Over residues 231-243 the composition is skewed to acidic residues; the sequence is TTDEDDDDLDDAD. Residues 258 to 284 are compositionally biased toward low complexity; that stretch reads RRGAAAPPVTGGASHAAPQPAAARTAP. A compositionally biased stretch (polar residues) spans 293-302; that stretch reads GSSNTNTTTN. Residues 310 to 321 show a composition bias toward low complexity; that stretch reads RQSRAAAPRGAS. The segment covering 322-331 has biased composition (gly residues); sequence GPSGGVGVGV. The segment covering 369 to 390 has biased composition (pro residues); the sequence is PASPHRPPAAPMPGSAPRPGPP. Positions 391-409 are enriched in low complexity; the sequence is ASAAASGPARPRAAVAPCV. Over residues 410-421 the composition is skewed to pro residues; the sequence is RAPPPGPGPRAP. The segment covering 422–431 has biased composition (low complexity); it reads APGAEPAARP. The span at 439–453 shows a compositional bias: polar residues; sequence QSHSSLAQAANQEQS. Positions 464-476 are enriched in gly residues; sequence GSGGPGVEGGHGP. A compositionally biased stretch (low complexity) spans 477 to 493; the sequence is SRGAAPSGAAPLPSAAS. Positions 509–519 are enriched in polar residues; it reads GQENPSPQSTR. Positions 539–549 are enriched in gly residues; it reads GPGGRGQGGPG. Positions 550 to 592 are enriched in low complexity; it reads TPLTSSAASASSSSASSSSAPTPAGAASSAAGAASSSASASSG. Over residues 617 to 626 the composition is skewed to basic residues; it reads GPRKCARKTR.

It belongs to the simplexviruses ICp0 family. As to quaternary structure, interacts directly with human RCOR1/CoREST protein, leading to the disruption of the human BHC corepressor complex. Interacts with human CENPA, leading to its degradation. Interacts with human USP7; this interaction modulates ICP0 stability. Interacts with human CDC34. Interacts (when phosphorylated) with human RNF8 (via FHA domain). Interacts with human TRIM27. Interacts with human ZBP1. Interacts with host MORC3; this interaction promotes the degradation of host MORC3. Post-translationally, phosphorylated at Thr-67, leading to promote interaction with host RNF8. Phosphorylated by host CHEK2; leading to increased SUMO-targeted ubiquitin ligase activity of ICP0. In terms of processing, auto-ubiquitinated. Deubiquitinated by host USP7; leading to stabilize it.

The protein localises to the host cytoplasm. It localises to the host nucleus. It carries out the reaction S-ubiquitinyl-[E2 ubiquitin-conjugating enzyme]-L-cysteine + [acceptor protein]-L-lysine = [E2 ubiquitin-conjugating enzyme]-L-cysteine + N(6)-ubiquitinyl-[acceptor protein]-L-lysine.. Its function is as follows. SUMO-targeted ubiquitin ligase that plays an essential role in nuclear antiviral defense evasion triggered by dsDNA viruses. Acts during the initial stages of lytic infection and the reactivation of latent viral genome. Prevents the antiviral effect of nuclear bodies by degrading host PML, SP100 and MORC3. Prevents antiviral response to viral DNA induced by IFI16 by degrading it. Additionally, inhibits host IRF3 nuclear signaling to prevent interferon production by the infected cells. Interestingly, the E3 ubiquitin ligase activity associated with the RING finger domain does not seem to be directly required to inhibit the activation of IRF3 but instead plays a critical role in modulating the cellular localization of ICP0. Upon reactivation of latent genome, suppresses the silencing of viral DNA by dissociating either HDAC1 or HDAC2 from the HDAC-RCOR1-REST-KDM1A complex localized at the ND10 structures and causes their dispersal. Two cellular histone ubiquitin ligases RNF8 and RNF168 are also targeted by ICP0 for degradation, leading to a loss of ubiquitinated forms of H2A, a relief of transcriptional repression, and the activation of latent viral genomes. Enhances the localization of host CCND3 to ND10 bodies that serve as precursors of replication compartments to enable efficient viral replication. Like many RING-finger E3 ubiquitin ligases, ICP0 can induce its own ubiquitination, an activity that promotes its instability due to its targeting to the 26S proteasome for degradation. ICP0 restricts this process by recruiting the cellular ubiquitin-specific protease USP7 that cleaves the anchored ubiquitin chains from ICP0, thereby promoting its stabilization. The chain is E3 ubiquitin-protein ligase ICP0 (ICP0) from Homo sapiens (Human).